The chain runs to 317 residues: Tyrosine--tRNA ligase (317 aa).

Y33 serves as a coordination point for L-tyrosine. A 'HIGH' region motif is present at residues 38 to 46 (PSGKIHMGH). Positions 155, 159, 162, and 177 each coordinate L-tyrosine. The short motif at 211 to 215 (KMSSS) is the 'KMSKS' region element. Residue S214 coordinates ATP.

This sequence belongs to the class-I aminoacyl-tRNA synthetase family. TyrS type 3 subfamily. Homodimer.

It localises to the cytoplasm. The catalysed reaction is tRNA(Tyr) + L-tyrosine + ATP = L-tyrosyl-tRNA(Tyr) + AMP + diphosphate + H(+). Catalyzes the attachment of tyrosine to tRNA(Tyr) in a two-step reaction: tyrosine is first activated by ATP to form Tyr-AMP and then transferred to the acceptor end of tRNA(Tyr). The sequence is that of Tyrosine--tRNA ligase from Methanococcoides burtonii (strain DSM 6242 / NBRC 107633 / OCM 468 / ACE-M).